Reading from the N-terminus, the 497-residue chain is Penton protein (497 aa).

Residues 293–295 carry the Cell attachment site motif; the sequence is RGD.

This sequence belongs to the adenoviridae penton family. As to quaternary structure, interacts (via the cell attachment site RGD) with host heterodimer ITGAV-ITGB5; this interaction promotes virus internalization. Interacts with host WWP1 and WWP2. Interacts with the fiber protein (via N-terminal tail region). Interacts with the capsid vertex protein; this interaction binds the penton base to neighboring peripentonal hexons.

Its subcellular location is the virion. It is found in the host nucleus. In terms of biological role, major capsid protein that self-associates to form penton base pentamers, each in the shape of a pentagon, situated at the 12 vertices of the pseudo T=25 capsid. Involved in virus secondary attachment to host cell after initial attachment by the fiber protein. Binds host integrin heterodimer ITGAV-ITGB5 (alphaV-beta5) thereby triggering clathrin-mediated endocytosis of virions. Mediates initial virus attachment to CXADR-negative cells. Binding to integrins ITGAV-ITGB5 also seems to induce macropinocytosis uptake of the virus. As the virus enters the host cell, penton proteins are shed concomitant with virion acidification in the endosome. This chain is Penton protein, found in Human adenovirus A serotype 12 (HAdV-12).